Consider the following 388-residue polypeptide: MNLHEYQAKQLFARYGLPAPVGYACTTPREAEEAASKIGAGPWVVKCQVHAGGRGKAGGVKVVNSKEDIRAFAENWLGKRLVTYQTDANGQPVNQILVEAATDIAKELYLGAVVDRSSRRVVFMASTEGGVEIEKVAEETPQLIHKVALDPLTGPMPYQGRELAFKLGLEGKLVQQFTKIFMGLATIFLERDLALIEINPLVITKQGDLICLDGKLGADGNALFRQLDLREMRDQSQEDPREAQAAQWELNYVALDGNIGCMVNGAGLAMGTMDIVKLHGGEPANFLDVGGGATKERVTEAFKIILSDDKVKVVLVNIFGGIVRCDLIADGIIGAVAEVGVNVPVVVRLEGNNAELGAKKLADSGLNIIAAKGLTDAAQQVVAAVEGK.

The ATP-grasp domain maps to Lys9–Gln244. ATP contacts are provided by residues Lys46, Gly53–Gly55, Glu99, Thr102, and Glu107. Residues Asn199 and Asp213 each coordinate Mg(2+). Substrate is bound by residues Asn264 and Gly321 to Val323.

This sequence belongs to the succinate/malate CoA ligase beta subunit family. In terms of assembly, heterotetramer of two alpha and two beta subunits. Mg(2+) is required as a cofactor.

It catalyses the reaction succinate + ATP + CoA = succinyl-CoA + ADP + phosphate. The enzyme catalyses GTP + succinate + CoA = succinyl-CoA + GDP + phosphate. It participates in carbohydrate metabolism; tricarboxylic acid cycle; succinate from succinyl-CoA (ligase route): step 1/1. Succinyl-CoA synthetase functions in the citric acid cycle (TCA), coupling the hydrolysis of succinyl-CoA to the synthesis of either ATP or GTP and thus represents the only step of substrate-level phosphorylation in the TCA. The beta subunit provides nucleotide specificity of the enzyme and binds the substrate succinate, while the binding sites for coenzyme A and phosphate are found in the alpha subunit. The polypeptide is Succinate--CoA ligase [ADP-forming] subunit beta (Shigella boydii serotype 18 (strain CDC 3083-94 / BS512)).